The chain runs to 344 residues: Heat-inducible transcription repressor HrcA (344 aa).

It belongs to the HrcA family.

Negative regulator of class I heat shock genes (grpE-dnaK-dnaJ and groELS operons). Prevents heat-shock induction of these operons. The chain is Heat-inducible transcription repressor HrcA from Streptococcus agalactiae serotype Ia (strain ATCC 27591 / A909 / CDC SS700).